The following is a 142-amino-acid chain: Large ribosomal subunit protein uL11 (142 aa).

Belongs to the universal ribosomal protein uL11 family. As to quaternary structure, part of the ribosomal stalk of the 50S ribosomal subunit. Interacts with L10 and the large rRNA to form the base of the stalk. L10 forms an elongated spine to which L12 dimers bind in a sequential fashion forming a multimeric L10(L12)X complex. One or more lysine residues are methylated.

Its function is as follows. Forms part of the ribosomal stalk which helps the ribosome interact with GTP-bound translation factors. In Mesorhizobium japonicum (strain LMG 29417 / CECT 9101 / MAFF 303099) (Mesorhizobium loti (strain MAFF 303099)), this protein is Large ribosomal subunit protein uL11.